The following is a 580-amino-acid chain: MYLLTINYSLQCKHYTKSNKKLYIAKIMTEFYRAPEIFRQNAIIVKKSRRDISDDENSTIVRRNCKIEASKLNSSLLRKVSGDLNDVIVTKKLKTDCWKLSEDTRDVTSMSLDRDTILLSTSQTSDNLQLFQLRNNEINEQARGGKLLHSLQTITVPGKSILATDIMQSQNNDTVVSFDDKVHDRILLSGHSDGYVNLIATSIENGNAKILRRFNHSKHLKVITDSMDSVDLATQIYNTSRSKPIRHLKTWNKHHFTSVINDSLFVYDVNQQCKDPLYLNSFPGLEHVDVNPVNPFTFSLTGTKFGQSGIALLDLRLGDGNGIRVPGPQDSNAESGKCYTSKWLDEYTVVNSVGKALKIWDIRYGKVRAHLLGHNGHVNSLDYDNEMKKIYSTDDQGLIMSWDIKDLKFTDQVMCCRPSHGIQSFGLPADCVQNGNIIQSPDLERIGNKKHLGSHFVGLADSHFISLQDQELRSYSVVDMPMVLPPPRNPLRLLESVSTETKSEPPATMVYSSSDETTKDSSNSAFEDSEDTLEYEAHSPMTPALDSMFDGKTHSFDIPTIPLLSGIRRGSDATFVCEGL.

WD repeat units lie at residues 102-141 (EDTR…INEQ), 170-209 (QNND…GNAK), 222-261 (VITD…SVIN), 333-370 (AESG…VRAH), and 373-412 (GHNG…FTDQ). Residues 497–534 (VSTETKSEPPATMVYSSSDETTKDSSNSAFEDSEDTLE) form a disordered region. Residues 510 to 526 (VYSSSDETTKDSSNSAF) show a composition bias toward polar residues.

It belongs to the WD repeat DSE1 family.

In terms of biological role, involved in cell wall metabolism and required for the separation of the mother and daughter cells. In Kluyveromyces lactis (strain ATCC 8585 / CBS 2359 / DSM 70799 / NBRC 1267 / NRRL Y-1140 / WM37) (Yeast), this protein is Protein DSE1 (DSE1).